The following is a 480-amino-acid chain: GTPase Der (480 aa).

2 EngA-type G domains span residues 5 to 170 and 178 to 351; these read PVVA…PSQE and LKLA…QSSM. Residues 11–18, 58–62, 123–126, 184–191, 231–235, and 296–299 each bind GTP; these read GRPNVGKS, DTGGI, NKVD, DTAGV, and NKWD. In terms of domain architecture, KH-like spans 352–436; it reads FEVSTNRLTQ…PLNVVFKLNE (85 aa). Positions 438-454 are enriched in polar residues; that stretch reads PYANKSDTPTKAKTQQL. The disordered stretch occupies residues 438–480; it reads PYANKSDTPTKAKTQQLRQRERNRAQKFTTKDKPRFTNKDKKR. Positions 455–480 are enriched in basic and acidic residues; that stretch reads RQRERNRAQKFTTKDKPRFTNKDKKR.

The protein belongs to the TRAFAC class TrmE-Era-EngA-EngB-Septin-like GTPase superfamily. EngA (Der) GTPase family. Associates with the 50S ribosomal subunit.

GTPase that plays an essential role in the late steps of ribosome biogenesis. This chain is GTPase Der, found in Psychrobacter cryohalolentis (strain ATCC BAA-1226 / DSM 17306 / VKM B-2378 / K5).